Consider the following 271-residue polypeptide: Neurexophilin-1 (271 aa).

The N-terminal stretch at 1–21 is a signal peptide; the sequence is MQAACWYVLLLLQPTVYLVTC. The interval 22 to 97 is II; it reads ANLTNGGKSE…WDWLRNSTDL (76 aa). Asn-23, Asn-68, Asn-93, Asn-146, Asn-156, and Asn-162 each carry an N-linked (GlcNAc...) asparagine glycan. Residues 98-176 are III; that stretch reads QEPRPRAKRR…LVPPTKIVEF (79 aa). The tract at residues 177 to 185 is IV (linker domain); it reads DLAQQTVID. The v (Cys-rich) stretch occupies residues 186–271; it reads AKDSKSFNCR…HSDTPYFPSG (86 aa).

The protein belongs to the neurexophilin family. Post-translationally, may be proteolytically processed at the boundary between the N-terminal non-conserved and the central conserved domain in neuron-like cells. In terms of tissue distribution, highest level in brain.

Its subcellular location is the secreted. Its function is as follows. May be signaling molecules that resemble neuropeptides. Ligand for alpha-neurexins. This chain is Neurexophilin-1 (Nxph1), found in Rattus norvegicus (Rat).